Here is a 1178-residue protein sequence, read N- to C-terminus: Zinc finger CCHC domain-containing protein 2 (1178 aa).

4 disordered regions span residues 1-90 (MLRM…GPSA), 207-249 (AARG…RVGG), 557-683 (VTSA…SVNQ), and 936-986 (LSTA…SDST). The span at 43 to 67 (PPPPPPPPAGPSRGPLPPPPPPRGL) shows a compositional bias: pro residues. A compositionally biased stretch (gly residues) spans 75-88 (AAAGAGMPGGGGGP). Positions 208 to 219 (ARGEGSRGGAED) are enriched in basic and acidic residues. Residues 220-229 (ERGEDGDGEQ) are compositionally biased toward acidic residues. The residue at position 236 (Ser236) is a Phosphoserine. The segment covering 580–594 (PQTEKEKIKKTDNRL) has biased composition (basic and acidic residues). A compositionally biased stretch (polar residues) spans 595–607 (NSRINGIRLSTPQ). Positions 632 to 641 (SSESYSSPSS) are enriched in low complexity. Residues 642 to 661 (PRHDGRESFESEEEKDRDTD) show a composition bias toward basic and acidic residues. The span at 665-683 (EDSGNPSTTRFTGYGSVNQ) shows a compositional bias: polar residues. Residues 937-948 (STAATSPQPASA) show a composition bias toward low complexity. Over residues 959–973 (PAVPTHTPGPAPSPS) the composition is skewed to pro residues. Residues 974 to 986 (PALTHSTAQSDST) show a composition bias toward polar residues. The segment at 1131–1148 (VSCYNCGVSGHYAQDCKQ) adopts a CCHC-type zinc-finger fold.

This chain is Zinc finger CCHC domain-containing protein 2, found in Homo sapiens (Human).